The sequence spans 300 residues: D-alanine--D-alanine ligase (300 aa).

Positions Lys-99 to Lys-293 constitute an ATP-grasp domain. ATP is bound at residue Ile-126–Thr-181. Mg(2+)-binding residues include Asp-248, Glu-260, and Asn-262.

Belongs to the D-alanine--D-alanine ligase family. Requires Mg(2+) as cofactor. It depends on Mn(2+) as a cofactor.

Its subcellular location is the cytoplasm. It catalyses the reaction 2 D-alanine + ATP = D-alanyl-D-alanine + ADP + phosphate + H(+). Its pathway is cell wall biogenesis; peptidoglycan biosynthesis. Its function is as follows. Cell wall formation. In Clostridium botulinum (strain ATCC 19397 / Type A), this protein is D-alanine--D-alanine ligase.